The sequence spans 151 residues: Deoxyuridine 5'-triphosphate nucleotidohydrolase (151 aa).

Substrate contacts are provided by residues 70–72 (RSG), N83, 87–89 (LID), and M97.

The protein belongs to the dUTPase family. Mg(2+) is required as a cofactor.

It carries out the reaction dUTP + H2O = dUMP + diphosphate + H(+). Its pathway is pyrimidine metabolism; dUMP biosynthesis; dUMP from dCTP (dUTP route): step 2/2. Its function is as follows. This enzyme is involved in nucleotide metabolism: it produces dUMP, the immediate precursor of thymidine nucleotides and it decreases the intracellular concentration of dUTP so that uracil cannot be incorporated into DNA. This chain is Deoxyuridine 5'-triphosphate nucleotidohydrolase, found in Actinobacillus succinogenes (strain ATCC 55618 / DSM 22257 / CCUG 43843 / 130Z).